We begin with the raw amino-acid sequence, 1277 residues long: Myosin-1 (1277 aa).

Positions 1–13 are enriched in basic residues; the sequence is MAPSKKAGKKVTP. The interval 1 to 27 is disordered; sequence MAPSKKAGKKVTPKKAAGNNAKSKVAK. Positions 39-718 constitute a Myosin motor domain; it reads VGVTDMTLLT…TLFALETMRD (680 aa). 132-139 is a binding site for ATP; it reads GESGAGKT. The residue at position 360 (Ser-360) is a Phosphoserine. The segment at 407–489 is actin-binding; that stretch reads IIGILDIFGF…PGIFAALNDA (83 aa). The tract at residues 567 to 587 is disordered; sequence LFPDRPDPNSKKRPPTASDRI. IQ domains follow at residues 722 to 742 and 743 to 768; these read HNMA…KHEC and ARRI…YGHQ. Residues 776–965 enclose the TH1 domain; sequence RRRFSLLSYR…TVHVPSGEPA (190 aa). Disordered regions lie at residues 952 to 1072 and 1129 to 1259; these read YKSH…AEPE and PKAA…GPGQ. Low complexity predominate over residues 1015–1056; the sequence is PAVATPSVVSTPAAAAVVSKPKPAASTPAAVRAPAVTPAARS. Residues 1057–1068 are compositionally biased toward pro residues; that stretch reads VPPPPPPPPPAR. An SH3 domain is found at 1071–1129; sequence PEKEMYRAKFDFQGQEGEMSLTKDDEVELIEKDENGWWLVKKDGVEAWAPYNYLERIAP. The segment covering 1132-1142 has biased composition (pro residues); that stretch reads APAPPPPPARP. Composition is skewed to polar residues over residues 1145-1159 and 1185-1197; these read TSTV…TTAD and AATT…SSRP. Residues 1204–1224 show a composition bias toward pro residues; it reads VPPPVAAKPKPPVVAPKPGVP. The segment covering 1226-1240 has biased composition (low complexity); that stretch reads PGGKPALPTTARPAP. Positions 1241–1258 are enriched in gly residues; that stretch reads SGGGAAAGRLGGGGGGPG.

This sequence belongs to the TRAFAC class myosin-kinesin ATPase superfamily. Myosin family. In terms of processing, phosphorylation of the TEDS site (Ser-360) is required for the polarization of the actin cytoskeleton. Phosphorylation probably activates the myosin-I ATPase activity.

It is found in the cytoplasm. Its subcellular location is the cytoskeleton. It localises to the actin patch. Type-I myosin implicated in the organization of the actin cytoskeleton. Required for proper actin cytoskeleton polarization. At the cell cortex, assembles in patch-like structures together with proteins from the actin-polymerizing machinery and promotes actin assembly. Functions as actin nucleation-promoting factor (NPF) for the Arp2/3 complex. The protein is Myosin-1 (MYO1) of Coprinopsis cinerea (strain Okayama-7 / 130 / ATCC MYA-4618 / FGSC 9003) (Inky cap fungus).